The chain runs to 447 residues: UPF0210 protein LAF_0976 (447 aa).

The protein belongs to the UPF0210 family. As to quaternary structure, homodimer.

The chain is UPF0210 protein LAF_0976 from Limosilactobacillus fermentum (strain NBRC 3956 / LMG 18251) (Lactobacillus fermentum).